Consider the following 212-residue polypeptide: Membrane-bound lytic murein transglycosylase E (212 aa).

The protein belongs to the transglycosylase Slt family.

It catalyses the reaction Exolytic cleavage of the (1-&gt;4)-beta-glycosidic linkage between N-acetylmuramic acid (MurNAc) and N-acetylglucosamine (GlcNAc) residues in peptidoglycan, from either the reducing or the non-reducing ends of the peptidoglycan chains, with concomitant formation of a 1,6-anhydrobond in the MurNAc residue.. Its function is as follows. Murein-degrading enzyme. May play a role in recycling of muropeptides during cell elongation and/or cell division. The chain is Membrane-bound lytic murein transglycosylase E (mltE) from Buchnera aphidicola subsp. Baizongia pistaciae (strain Bp).